Reading from the N-terminus, the 607-residue chain is Replication factor C large subunit (607 aa).

G55–T62 serves as a coordination point for ATP. The segment at E468–F607 is disordered. Over residues T506–N518 the composition is skewed to basic and acidic residues. Residues S548 to K558 are compositionally biased toward polar residues.

The protein belongs to the activator 1 small subunits family. RfcL subfamily. As to quaternary structure, heteromultimer composed of small subunits (RfcS) and large subunits (RfcL).

Part of the RFC clamp loader complex which loads the PCNA sliding clamp onto DNA. In Methanosarcina acetivorans (strain ATCC 35395 / DSM 2834 / JCM 12185 / C2A), this protein is Replication factor C large subunit.